The primary structure comprises 1362 residues: Integrator complex subunit 2 homolog (1362 aa).

Low complexity predominate over residues 1–10 (MITSNNNNKN). Disordered regions lie at residues 1–20 (MITS…EMKS), 629–660 (TTGT…SSPN), and 928–963 (NNNK…EEEE). Basic and acidic residues predominate over residues 945 to 955 (DDVKMKDKEKE).

The protein belongs to the Integrator subunit 2 family. Component of the Integrator complex. The core complex associates with protein phosphatase 2A subunits, to form the Integrator-PP2A (INTAC) complex.

It is found in the nucleus. Its subcellular location is the cytoplasm. Its function is as follows. Component of the integrator complex, a multiprotein complex that terminates RNA polymerase II (Pol II) transcription in the promoter-proximal region of genes. The integrator complex provides a quality checkpoint during transcription elongation by driving premature transcription termination of transcripts that are unfavorably configured for transcriptional elongation: the complex terminates transcription by (1) catalyzing dephosphorylation of the C-terminal domain (CTD) of Pol II subunit polr2a, (2) degrading the exiting nascent RNA transcript via endonuclease activity and (3) promoting the release of Pol II from bound DNA. The integrator complex is also involved in terminating the synthesis of non-coding Pol II transcripts, such as enhancer RNAs (eRNAs), small nuclear RNAs (snRNAs), telomerase RNAs and long non-coding RNAs (lncRNAs). The polypeptide is Integrator complex subunit 2 homolog (ints2) (Dictyostelium discoideum (Social amoeba)).